Consider the following 837-residue polypeptide: MSEEEVHDTSSEASEVFTNQPNAFVRGVRSIFGYRKTSLTLFVILTIVVTAGLSFYDNSLELTIELPTSQLEKEILESSWLDLQNIARYPHTYGSRANDQVHDYLEEIIQDMEYDNDGEKIMFESGKGVVSYYESNNLLVRVNGSDGTLPALLLSAHYDSVPSSFGVTDDGMGVASLLGVLRFVAHNQPRRTIIFNFNNNEEFGLFGAHAFVKHPWFKQVGYFLNLEGTGAGGKAVLFRGTDYGIVKNFGGVRYPYATSIFQQGFNNHVIHSETDYKVYKEAGLRGLDLAFYKPRDKYHTGEDNIRNVSPKSLWHMMSNAIDFVQMGVVDDSEEPAVYTTFLGYFFATPISALARVNLVLLVLFPVVSTPLLFVIVKYKKWKLRVTNFLGVPLAMGLAVAVGQVGNPMLVSSHPMMVVATTTSIVVLVYYVVLNGVDWVNTSSDQKLVTMIEVSFVYWVVLVYVTWSGGDHTGEFGVTVLFFVQASTSLLGLIGWTFTRVRGGDEPLLSGEEERYGTEDERDTEKPLVEHNYDWSLQYLLIVPVSSLVVYNSGWLVLEGVNKTVQESLASEHLIYWIVVVFSQFLVLPVVPFITKFNRYIVLGLSVVVVVGVLMSMAVHPFNQGSPMKLRFIERVGQNDMVEVYGRQGFVEDVLSDLPSVKQTQAKLECEALPDGLEVCKYKSGLTPGNLTVEVTTEPRAESYGLISGAITIAAPENRMCTVHFPPDRVKAVVVGKFGNNFKAIPDGFSREKGNYIYKDRNGISQLELYKLDWNKDYHVGFEWLPDIDDEGGMRVEVECFWGDMVPAYQEVVHYSPNWVTWANKERGLVGVVKHVDV.

Topologically, residues 1-36 (MSEEEVHDTSSEASEVFTNQPNAFVRGVRSIFGYRK) are cytoplasmic. Residues 37 to 57 (TSLTLFVILTIVVTAGLSFYD) form a helical membrane-spanning segment. Over 58–355 (NSLELTIELP…FATPISALAR (298 aa)) the chain is Vacuolar. N143 is a glycosylation site (N-linked (GlcNAc...) asparagine). Zn(2+) contacts are provided by H157 and D169. Catalysis depends on E201, which acts as the Proton acceptor. Zn(2+) contacts are provided by E202, E227, and H299. A helical membrane pass occupies residues 356–376 (VNLVLLVLFPVVSTPLLFVIV). Topologically, residues 377–384 (KYKKWKLR) are cytoplasmic. A helical membrane pass occupies residues 385 to 405 (VTNFLGVPLAMGLAVAVGQVG). Topologically, residues 406–415 (NPMLVSSHPM) are vacuolar. The helical transmembrane segment at 416–436 (MVVATTTSIVVLVYYVVLNGV) threads the bilayer. The Cytoplasmic portion of the chain corresponds to 437–446 (DWVNTSSDQK). Residues 447-467 (LVTMIEVSFVYWVVLVYVTWS) traverse the membrane as a helical segment. Topologically, residues 468–474 (GGDHTGE) are vacuolar. The helical transmembrane segment at 475-495 (FGVTVLFFVQASTSLLGLIGW) threads the bilayer. The Cytoplasmic segment spans residues 496-539 (TFTRVRGGDEPLLSGEEERYGTEDERDTEKPLVEHNYDWSLQYL). Residues 540–560 (LIVPVSSLVVYNSGWLVLEGV) form a helical membrane-spanning segment. N-linked (GlcNAc...) asparagine glycosylation is present at N561. Residues 561-572 (NKTVQESLASEH) lie on the Vacuolar side of the membrane. Residues 573-593 (LIYWIVVVFSQFLVLPVVPFI) form a helical membrane-spanning segment. Residues 594–598 (TKFNR) lie on the Cytoplasmic side of the membrane. Residues 599 to 619 (YIVLGLSVVVVVGVLMSMAVH) traverse the membrane as a helical segment. Topologically, residues 620–837 (PFNQGSPMKL…LVGVVKHVDV (218 aa)) are vacuolar. N-linked (GlcNAc...) asparagine glycosylation is present at N689.

This sequence belongs to the peptidase M28 family. Requires Zn(2+) as cofactor.

The protein localises to the vacuole membrane. In terms of biological role, may be involved in vacuolar sorting and osmoregulation. This is Vacuolar membrane protease from Candida albicans (strain SC5314 / ATCC MYA-2876) (Yeast).